Consider the following 183-residue polypeptide: Apo-citrate lyase phosphoribosyl-dephospho-CoA transferase (183 aa).

It belongs to the CitX family.

The enzyme catalyses apo-[citrate lyase ACP] + 2'-(5''-triphospho-alpha-D-ribosyl)-3'-dephospho-CoA = holo-[citrate lyase ACP] + diphosphate. Transfers 2-(5''-triphosphoribosyl)-3'-dephosphocoenzyme-A on a serine residue to the apo-acyl carrier protein (gamma chain) of the citrate lyase to yield holo-acyl carrier protein. The chain is Apo-citrate lyase phosphoribosyl-dephospho-CoA transferase from Escherichia coli O6:K15:H31 (strain 536 / UPEC).